Here is a 231-residue protein sequence, read N- to C-terminus: Large ribosomal subunit protein uL1 (231 aa).

This sequence belongs to the universal ribosomal protein uL1 family. In terms of assembly, part of the 50S ribosomal subunit.

In terms of biological role, binds directly to 23S rRNA. The L1 stalk is quite mobile in the ribosome, and is involved in E site tRNA release. Functionally, protein L1 is also a translational repressor protein, it controls the translation of the L11 operon by binding to its mRNA. The polypeptide is Large ribosomal subunit protein uL1 (Francisella philomiragia subsp. philomiragia (strain ATCC 25017 / CCUG 19701 / FSC 153 / O#319-036)).